The primary structure comprises 257 residues: tRNA pseudouridine synthase A (257 aa).

Catalysis depends on D52, which acts as the Nucleophile. Y111 is a substrate binding site.

This sequence belongs to the tRNA pseudouridine synthase TruA family. In terms of assembly, homodimer.

It catalyses the reaction uridine(38/39/40) in tRNA = pseudouridine(38/39/40) in tRNA. Its function is as follows. Formation of pseudouridine at positions 38, 39 and 40 in the anticodon stem and loop of transfer RNAs. This is tRNA pseudouridine synthase A from Dinoroseobacter shibae (strain DSM 16493 / NCIMB 14021 / DFL 12).